The primary structure comprises 92 residues: Small ribosomal subunit protein uS19 (92 aa).

This sequence belongs to the universal ribosomal protein uS19 family.

Protein S19 forms a complex with S13 that binds strongly to the 16S ribosomal RNA. The polypeptide is Small ribosomal subunit protein uS19 (Caulobacter sp. (strain K31)).